Here is a 429-residue protein sequence, read N- to C-terminus: Enolase (429 aa).

Q163 contributes to the (2R)-2-phosphoglycerate binding site. E205 serves as the catalytic Proton donor. Positions 242, 287, and 314 each coordinate Mg(2+). 4 residues coordinate (2R)-2-phosphoglycerate: K339, R368, S369, and K390. The active-site Proton acceptor is the K339.

This sequence belongs to the enolase family. Mg(2+) serves as cofactor.

It localises to the cytoplasm. The protein localises to the secreted. Its subcellular location is the cell surface. It carries out the reaction (2R)-2-phosphoglycerate = phosphoenolpyruvate + H2O. It functions in the pathway carbohydrate degradation; glycolysis; pyruvate from D-glyceraldehyde 3-phosphate: step 4/5. Catalyzes the reversible conversion of 2-phosphoglycerate (2-PG) into phosphoenolpyruvate (PEP). It is essential for the degradation of carbohydrates via glycolysis. This is Enolase from Magnetococcus marinus (strain ATCC BAA-1437 / JCM 17883 / MC-1).